A 164-amino-acid chain; its full sequence is Pleckstrin homology domain-containing family J member 1 (164 aa).

Residues 15 to 108 (PAEMAAELGM…WMEALQRASY (94 aa)) enclose the PH domain.

This is Pleckstrin homology domain-containing family J member 1 (Plekhj1) from Mus musculus (Mouse).